A 220-amino-acid polypeptide reads, in one-letter code: Large ribosomal subunit protein bL25 (220 aa).

A compositionally biased stretch (acidic residues) spans 186–199; it reads ELEDEDEDEDEVAA. Residues 186 to 220 are disordered; the sequence is ELEDEDEDEDEVAADEVPATEVDDQAAVKEGEGKE. Residues 211-220 show a composition bias toward basic and acidic residues; sequence AAVKEGEGKE.

Belongs to the bacterial ribosomal protein bL25 family. CTC subfamily. As to quaternary structure, part of the 50S ribosomal subunit; part of the 5S rRNA/L5/L18/L25 subcomplex. Contacts the 5S rRNA. Binds to the 5S rRNA independently of L5 and L18.

Functionally, this is one of the proteins that binds to the 5S RNA in the ribosome where it forms part of the central protuberance. The sequence is that of Large ribosomal subunit protein bL25 from Christiangramia forsetii (strain DSM 17595 / CGMCC 1.15422 / KT0803) (Gramella forsetii).